The chain runs to 338 residues: Lipoate-protein ligase A (338 aa).

One can recognise a BPL/LPL catalytic domain in the interval 29 to 216 (PATQRVLFLW…AFFVHYGERV (188 aa)). ATP contacts are provided by residues R71, 76-79 (GAVF), and K134. Residue K134 participates in (R)-lipoate binding.

The protein belongs to the LplA family. As to quaternary structure, monomer.

Its subcellular location is the cytoplasm. It carries out the reaction L-lysyl-[lipoyl-carrier protein] + (R)-lipoate + ATP = N(6)-[(R)-lipoyl]-L-lysyl-[lipoyl-carrier protein] + AMP + diphosphate + H(+). It functions in the pathway protein modification; protein lipoylation via exogenous pathway; protein N(6)-(lipoyl)lysine from lipoate: step 1/2. The protein operates within protein modification; protein lipoylation via exogenous pathway; protein N(6)-(lipoyl)lysine from lipoate: step 2/2. Its function is as follows. Catalyzes both the ATP-dependent activation of exogenously supplied lipoate to lipoyl-AMP and the transfer of the activated lipoyl onto the lipoyl domains of lipoate-dependent enzymes. In Salmonella newport (strain SL254), this protein is Lipoate-protein ligase A.